Here is a 341-residue protein sequence, read N- to C-terminus: Peptidoglycan recognition protein 3 (341 aa).

The signal sequence occupies residues methionine 1–alanine 17. N-acetylmuramoyl-L-alanine amidase domains are found at residues threonine 77–proline 179 and proline 200–proline 325. Asparagine 113 carries N-linked (GlcNAc...) asparagine glycosylation. Intrachain disulfides connect cysteine 178–cysteine 300, cysteine 194–cysteine 238, and cysteine 214–cysteine 220. The peptidoglycan site is built by histidine 231, arginine 235, and tyrosine 242. Positions histidine 264–asparagine 269 are interaction with murein.

Belongs to the N-acetylmuramoyl-L-alanine amidase 2 family. In terms of assembly, monomer. Homodimer; disulfide-linked. Heterodimer with PGLYRP4; disulfide-linked. Post-translationally, N-glycosylated. Detected in skin epidermis, eccrine sweat glands and ducts, ciliary body epithelial cells of the eye, in small intestine, colon, stomach and in mature epithelial cells of the tongue (at protein level). Highly expressed in skin and esophagus, expressed also in tonsils and thymus and to a much lesser extent in the stomach, descending colon, rectum and brain.

It localises to the secreted. Its function is as follows. Pattern receptor that binds to murein peptidoglycans (PGN) of Gram-positive bacteria. Has bactericidal activity towards Gram-positive bacteria. May kill Gram-positive bacteria by interfering with peptidoglycan biosynthesis. Also binds to Gram-negative bacteria, and has bacteriostatic activity towards Gram-negative bacteria. Plays a role in innate immunity. This chain is Peptidoglycan recognition protein 3 (PGLYRP3), found in Homo sapiens (Human).